Here is a 348-residue protein sequence, read N- to C-terminus: High mobility group protein 20A (348 aa).

Disordered regions lie at residues 1–114 (MENL…YVRF) and 181–213 (SRKAQDRQKGKLHRQDGARQPVHDHEKEADTKE). Polar residues-rich tracts occupy residues 34-47 (SESSFTGGTSQPVN) and 56-71 (SQVQQLQNESTNTAEN). A compositionally biased stretch (basic and acidic residues) spans 72–82 (TEQKPEEEQQR). Basic residues predominate over residues 83–97 (TKRGGWAKGRKRKKP). The segment at residues 104–172 (PKSPLTGYVR…RYMRELEQYQ (69 aa)) is a DNA-binding region (HMG box). The span at 183-213 (KAQDRQKGKLHRQDGARQPVHDHEKEADTKE) shows a compositional bias: basic and acidic residues. A coiled-coil region spans residues 230 to 274 (SKAREAELRQLRKSNMEFEERNAALQKHVESMRTAVEKLEVDVIQ).

It localises to the nucleus. In terms of biological role, plays a role in neuronal differentiation. In Gallus gallus (Chicken), this protein is High mobility group protein 20A (HMG20A).